We begin with the raw amino-acid sequence, 583 residues long: Fumarate reductase flavoprotein subunit (583 aa).

FAD-binding positions include 11–15, 35–37, 43–51, 155–157, and aspartate 211; these read GGGGA, VSK, SHTVSAEGG, and WFA. The residue at position 44 (histidine 44) is a Tele-8alpha-FAD histidine. Active-site residues include histidine 232 and arginine 248. Residues 353–354, glutamate 377, and 388–394 each bind FAD; these read HY and RLGSNSL.

It belongs to the FAD-dependent oxidoreductase 2 family. FRD/SDH subfamily. As to quaternary structure, part of an enzyme complex containing four subunits: a flavoprotein (FrdA), an iron-sulfur protein (FrdB), and two hydrophobic anchor proteins (FrdC and FrdD). FAD is required as a cofactor.

The protein resides in the cell membrane. It carries out the reaction a quinone + succinate = fumarate + a quinol. The catalysed reaction is a menaquinone + succinate = a menaquinol + fumarate. The polypeptide is Fumarate reductase flavoprotein subunit (frdA) (Mycobacterium tuberculosis (strain CDC 1551 / Oshkosh)).